A 134-amino-acid chain; its full sequence is Large ribosomal subunit protein bL12 (134 aa).

This sequence belongs to the bacterial ribosomal protein bL12 family. Homodimer. Part of the ribosomal stalk of the 50S ribosomal subunit. Forms a multimeric L10(L12)X complex, where L10 forms an elongated spine to which 2 to 4 L12 dimers bind in a sequential fashion. Binds GTP-bound translation factors.

In terms of biological role, forms part of the ribosomal stalk which helps the ribosome interact with GTP-bound translation factors. Is thus essential for accurate translation. The chain is Large ribosomal subunit protein bL12 from Anaplasma phagocytophilum (strain HZ).